We begin with the raw amino-acid sequence, 112 residues long: MAHCSTTAPFVDAMPASPQVTPAESEVVEVDEANDRPWVTVVWDDPVNLMHYVTYIFQKLFGYSKARATELMMQVHSEGKAVVSSGSRDKVENDVRKLHAAGLWATMQRDSS.

This sequence belongs to the ClpS family. As to quaternary structure, binds to the N-terminal domain of the chaperone ClpA.

Functionally, involved in the modulation of the specificity of the ClpAP-mediated ATP-dependent protein degradation. The chain is ATP-dependent Clp protease adapter protein ClpS from Rhodococcus opacus (strain B4).